Reading from the N-terminus, the 127-residue chain is UPF0102 protein Reut_A3265 (127 aa).

It belongs to the UPF0102 family.

The sequence is that of UPF0102 protein Reut_A3265 from Cupriavidus pinatubonensis (strain JMP 134 / LMG 1197) (Cupriavidus necator (strain JMP 134)).